Consider the following 498-residue polypeptide: Phosphatidylserine synthase (498 aa).

The interval 1 to 65 (MKKRTNSRGT…GSVSSAGARR (65 aa)) is disordered. Topologically, residues 1 to 92 (MKKRTNSRGT…VDDISLDFFY (92 aa)) are cytoplasmic. Residues 7 to 25 (SRGTPTSSGDALLDTSFSS) are compositionally biased toward polar residues. The chain crosses the membrane as a helical span at residues 93-113 (KPHTITLLAVSVLAVMYFAFV). Residues 114-122 (RNEANVDEN) are Lumenal-facing. A helical transmembrane segment spans residues 123–143 (LWAGLLCIVFFFLIVSVIAFP). Topologically, residues 144-153 (NGPFTRPHPA) are cytoplasmic. A helical membrane pass occupies residues 154–174 (VWRILFGCSVLYLLTLQFLMF). The Lumenal portion of the chain corresponds to 175-239 (QNYPTIRSIF…AFKAILIRHM (65 aa)). Asn205 is a glycosylation site (N-linked (GlcNAc...) asparagine). The chain crosses the membrane as a helical span at residues 240–260 (GILWAISVMWEITEITFAHLL). Residues 261-266 (PNFIEC) lie on the Cytoplasmic side of the membrane. Residues 267–287 (WWDALILDVIICNGLGIWMGL) traverse the membrane as a helical segment. Topologically, residues 288 to 339 (KICQILEMREYKWASIKDISTTTGKIKRAMLQFTPESWSAIRWLDPKSTAMR) are lumenal. A helical membrane pass occupies residues 340–360 (FAAVIQLVIFWQVTELNTFFL). Over 361-367 (KHIFEMP) the chain is Cytoplasmic. A helical transmembrane segment spans residues 368–388 (PDHFIVIGRLIFIGLFVAPSV). The Lumenal segment spans residues 389–402 (RQYYVYVTDTRCKR). A helical transmembrane segment spans residues 403–423 (VGTQCWVYGAIMVSEAILCIK). At 424–436 (NGKELFERTQAIN) the chain is on the cytoplasmic side. Residues 437–457 (IVLWLTVQVIISVAFVYLAVY) form a helical membrane-spanning segment. Residues 458-498 (WQQRQLKKVSSTPAKTKETIPASSSSPSKGKLSPQKEKKLK) are Lumenal-facing. The segment at 465–498 (KVSSTPAKTKETIPASSSSPSKGKLSPQKEKKLK) is disordered. Low complexity predominate over residues 478 to 490 (PASSSSPSKGKLS).

It belongs to the phosphatidyl serine synthase family.

The protein localises to the endoplasmic reticulum membrane. It catalyses the reaction a 1,2-diacyl-sn-glycero-3-phosphoethanolamine + L-serine = a 1,2-diacyl-sn-glycero-3-phospho-L-serine + ethanolamine. The protein operates within phospholipid metabolism; phosphatidylserine biosynthesis. In terms of biological role, catalyzes a base-exchange reaction in which the polar head group of phosphatidylethanolamine (PE) is replaced by L-serine. The polypeptide is Phosphatidylserine synthase (Drosophila melanogaster (Fruit fly)).